We begin with the raw amino-acid sequence, 149 residues long: D-aminoacyl-tRNA deacylase (149 aa).

Residues 137–138 (GP) carry the Gly-cisPro motif, important for rejection of L-amino acids motif.

Belongs to the DTD family. As to quaternary structure, homodimer.

The protein localises to the cytoplasm. The catalysed reaction is glycyl-tRNA(Ala) + H2O = tRNA(Ala) + glycine + H(+). The enzyme catalyses a D-aminoacyl-tRNA + H2O = a tRNA + a D-alpha-amino acid + H(+). An aminoacyl-tRNA editing enzyme that deacylates mischarged D-aminoacyl-tRNAs. Also deacylates mischarged glycyl-tRNA(Ala), protecting cells against glycine mischarging by AlaRS. Acts via tRNA-based rather than protein-based catalysis; rejects L-amino acids rather than detecting D-amino acids in the active site. By recycling D-aminoacyl-tRNA to D-amino acids and free tRNA molecules, this enzyme counteracts the toxicity associated with the formation of D-aminoacyl-tRNA entities in vivo and helps enforce protein L-homochirality. This is D-aminoacyl-tRNA deacylase from Thermoanaerobacter pseudethanolicus (strain ATCC 33223 / 39E) (Clostridium thermohydrosulfuricum).